Here is a 157-residue protein sequence, read N- to C-terminus: Ribonuclease H (157 aa).

The RNase H type-1 domain occupies 3 to 144 (ELKQLYIFTD…CDVLARKAAE (142 aa)). Residues aspartate 12, glutamate 50, aspartate 72, and aspartate 136 each coordinate Mg(2+).

The protein belongs to the RNase H family. Monomer. Requires Mg(2+) as cofactor.

The protein resides in the cytoplasm. It catalyses the reaction Endonucleolytic cleavage to 5'-phosphomonoester.. Endonuclease that specifically degrades the RNA of RNA-DNA hybrids. The sequence is that of Ribonuclease H from Shewanella frigidimarina (strain NCIMB 400).